A 179-amino-acid chain; its full sequence is Inner membrane-spanning protein YciB (179 aa).

Helical transmembrane passes span 22–42, 50–70, 76–96, 121–141, and 149–169; these read IYAA…YSWV, MALI…FFHN, WKVT…QWVM, LAWA…AFWL, and FKVF…GVYI.

This sequence belongs to the YciB family.

It localises to the cell inner membrane. Functionally, plays a role in cell envelope biogenesis, maintenance of cell envelope integrity and membrane homeostasis. This Citrobacter koseri (strain ATCC BAA-895 / CDC 4225-83 / SGSC4696) protein is Inner membrane-spanning protein YciB.